The following is a 516-amino-acid chain: GMP synthase [glutamine-hydrolyzing] (516 aa).

The region spanning 7 to 199 is the Glutamine amidotransferase type-1 domain; it reads KIIILDFGSQ…VFGLCKCQAT (193 aa). The active-site Nucleophile is the C84. Residues H173 and E175 contribute to the active site. The region spanning 200–391 is the GMPS ATP-PPase domain; that stretch reads WTMQGFIESN…LGLPDEAVHR (192 aa). 227-233 provides a ligand contact to ATP; it reads SGGVDSS.

In terms of assembly, homodimer.

The catalysed reaction is XMP + L-glutamine + ATP + H2O = GMP + L-glutamate + AMP + diphosphate + 2 H(+). It participates in purine metabolism; GMP biosynthesis; GMP from XMP (L-Gln route): step 1/1. Its function is as follows. Catalyzes the synthesis of GMP from XMP. This chain is GMP synthase [glutamine-hydrolyzing], found in Desulfotalea psychrophila (strain LSv54 / DSM 12343).